The sequence spans 152 residues: Endoribonuclease YbeY (152 aa).

His-113, His-117, and His-123 together coordinate Zn(2+).

This sequence belongs to the endoribonuclease YbeY family. Requires Zn(2+) as cofactor.

The protein resides in the cytoplasm. Single strand-specific metallo-endoribonuclease involved in late-stage 70S ribosome quality control and in maturation of the 3' terminus of the 16S rRNA. This chain is Endoribonuclease YbeY, found in Acidovorax ebreus (strain TPSY) (Diaphorobacter sp. (strain TPSY)).